Consider the following 156-residue polypeptide: AP-1 complex subunit sigma-1 (156 aa).

It belongs to the adaptor complexes small subunit family. In terms of assembly, adaptor protein complex 1 (AP-1) is a heterotetramer composed of two large adaptins (gamma-type subunit and beta-type subunit), a medium adaptin (mu-type subunit) and a small adaptin (sigma-type subunit).

It localises to the golgi apparatus. The protein resides in the trans-Golgi network. Its subcellular location is the cytoplasmic vesicle. It is found in the clathrin-coated vesicle membrane. Functionally, subunit of clathrin-associated adaptor protein complex 1 that plays a role in protein sorting in the trans-Golgi network (TGN) and endosomes. The AP complexes mediate the recruitment of clathrin to membranes and the recognition of sorting signals within the cytosolic tails of transmembrane cargo molecules. Also involved in early steps of phagocytosis and macropinocytosis. The protein is AP-1 complex subunit sigma-1 (ap1s1) of Dictyostelium discoideum (Social amoeba).